The sequence spans 313 residues: Kazal-type serine protease inhibitor domain-containing protein 1 (313 aa).

The signal sequence occupies residues 1–37 (MPRVFTGLPANYAAPTLALSLLLPLLLVVWTQLPVSA). Positions 56–136 (EGEGCAPCRP…EVPEPLCVCR (81 aa)) constitute an IGFBP N-terminal domain. 7 disulfide bridges follow: Cys-60–Cys-83, Cys-63–Cys-85, Cys-68–Cys-86, Cys-74–Cys-89, Cys-97–Cys-115, Cys-109–Cys-133, and Cys-142–Cys-175. The 51-residue stretch at 127 to 177 (EVPEPLCVCRSQRPLCGSDGRTYAQICRLQEAARARLDANLTVVHPGPCES) folds into the Kazal-like domain. N-linked (GlcNAc...) asparagine glycosylation is found at Asn-166 and Asn-190. In terms of domain architecture, Ig-like C2-type spans 179–276 (PQILSQPHNI…GQAEASATLT (98 aa)). Cys-200 and Cys-260 are oxidised to a cystine. An N-linked (GlcNAc...) asparagine glycan is attached at Asn-284. Residues 290–313 (QLQSRSLFPEEEEEAESEELGDYY) form a disordered region. The segment covering 298 to 313 (PEEEEEAESEELGDYY) has biased composition (acidic residues).

Highly expressed in the spleen. Moderately expressed in the skin, lung and urinary bladder. Weakly expressed in the brain, tongue, esophagus, stomach, large intestine, liver and bone. Expressed in osteoblastic cells during bone regeneration. Expressed in secretory osteoblasts in the tooth.

The protein resides in the secreted. Its subcellular location is the extracellular space. The protein localises to the extracellular matrix. In terms of biological role, involved in the proliferation of osteoblasts during bone formation and bone regeneration. Promotes matrix assembly. The protein is Kazal-type serine protease inhibitor domain-containing protein 1 (Kazald1) of Mus musculus (Mouse).